The sequence spans 36 residues: MDNQHKKIKGYRDLSQEEIDMMNRVKELGSQFEKLI.

The protein belongs to the Acb2 family.

A naturally occurring inactive form of this protein. Upon mutation by a single nucleotide change (changes the stop codon to Gln) inhibits CBASS immunity; most closely related viruses encode a long version of this protein. The long (mutated) version antagonizes the effector protein of host type II-A CBASS immunity by binding the second messenger 3',3'-cyclic GMP-AMP (cGAMP) and sequestering it (thus preventing host CapV activation) without degrading the cyclic nucleotide. The mutated version also antagonizes the effector protein of P.aeruginosa type I-A and type I-B CBASS systems. This Pseudomonas phage PaMx41 protein is Inactive anti-CBASS 2 protein.